The sequence spans 418 residues: BTB and MATH domain-containing protein 41 (418 aa).

A disordered region spans residues 1–33 (MEINNGAQPENAAVSIPSRSPSGKSEKRKSPSI). The 129-residue stretch at 45-173 (SFTNYWSVER…NDILTIGCEL (129 aa)) folds into the MATH domain. In terms of domain architecture, BTB spans 232-293 (SDFIIVASCG…TLDVLLRHMY (62 aa)).

In terms of assembly, interacts with cul-3.

Its pathway is protein modification; protein ubiquitination. Its function is as follows. Probable substrate-specific adapter of an E3 ubiquitin-protein ligase complex which mediates the ubiquitination and subsequent proteasomal degradation of target proteins. In Caenorhabditis elegans, this protein is BTB and MATH domain-containing protein 41 (bath-41).